Here is a 574-residue protein sequence, read N- to C-terminus: MEYLVGTPRSTYDVVVLGSGAGALTAAATAARAGKSVVVLEKASLLGGTSAISGGMLWIAANHHAREAGFEDTADAALEYVRAVSRGRAREELLAAAVTRGDSMLRFLEHELGVTFIYLDNFPDYRQDLPGAVDGGRTIEPELANIADLLGDLADRVRSDGRAPFTMQEYEDWGAFTRFPWDELDARAKAGLVAKGRALVAMLLAAAIREGAHVAVEARGERLIYSGQGADDGGRVTGVVLASGERIDATEAVVIATGGFEWDHSLADSMLASRLYTMCSPPTNEGDGLRMAQRIGAQTRGTREAWWAPMSITGDTRDGRPIGTLLRFERQGPGSIMVNRHGKRFANESQNYNDLARCLQSWDSPANTTLNTPAHVVFDQSYLERYGVLSHRAGEPTPDYLIEGATLPELAAKIGVPAENLVATVERFNAFAVTGEDPDFHRGQTAYDKYWGDADNVWPNPSLGPLEQGPFYALEVVNGAFGTNGGIATDGAARVLDVDGAPIAGLFAVGNATESAYAAGYPGAGATLGPLMTMGYLAGRTIAGQAAGYDDGAAAASAAELTDLAEPVLAEAAR.

Belongs to the FAD-dependent oxidoreductase 2 family. In terms of assembly, monomer. Homodimer. Requires FAD as cofactor.

The catalysed reaction is 4-oxocyclohexane-1-carboxylate + O2 = 4-oxocyclohex-2-ene-1-carboxylate + H2O2. Its activity is regulated as follows. Inhibited by 5,5'-dithio-bis(2- nitrobenzoate) and N-bromosuccinimide, but not by thiol and chelating reagents. Desaturase involved in a cyclohexanecarboxylate (CHCA) degradation pathway. Catalyzes the conversion of 4-oxocyclohexanecarboxylate (4-oxoCHCA) to 4-oxocyclohexenecarboxylate. Is highly specific for 4-oxocyclohexanecarboxylic acid and shows only slight activity with 4-oxo-2-methylcyclohex-2-enecarboxylic acid. In Sinomonas cyclohexanicum (Corynebacterium cyclohexanicum), this protein is 4-oxocyclohexanecarboxylate 2-dehydrogenase.